A 171-amino-acid polypeptide reads, in one-letter code: Secretion monitor (171 aa).

An N-terminal signal peptide occupies residues M1–G30.

The protein belongs to the SecM family.

The protein localises to the cytoplasm. It is found in the cytosol. It localises to the periplasm. In terms of biological role, regulates secA expression by translational coupling of the secM secA operon. Translational pausing at a specific Pro residue 5 residues before the end of the protein may allow disruption of a mRNA repressor helix that normally suppresses secA translation initiation. This is Secretion monitor from Pectobacterium atrosepticum (strain SCRI 1043 / ATCC BAA-672) (Erwinia carotovora subsp. atroseptica).